Consider the following 468-residue polypeptide: Serine/threonine-protein phosphatase 2A 55 kDa regulatory subunit B beta isoform (468 aa).

7 WD repeats span residues 47 to 86 (SSADIISTVEFNNTGELLATGDKGGRVVIFQREQENKNQP), 112 to 153 (EIEE…KRPE), 196 to 234 (AHTYHINSISVNSDYETYMSADDLRINLWNLEITNRSFN), 245 to 285 (ELTE…LCDK), 304 to 342 (EIISSISDVKFNHSGRYIMTRDYLTVKVWDLNMENRPIE), 359 to 400 (ENDC…DVTL), and 435 to 468 (DFSKKILHTAWHPSENIIAVAATNNLYIFQDKVN).

Belongs to the phosphatase 2A regulatory subunit B family. PP2A consists of a common heterodimeric core enzyme, composed of a 36 kDa catalytic subunit (subunit C) and a 65 kDa constant regulatory subunit (PR65 or subunit A), that associates with a variety of regulatory subunits.

The protein localises to the cytoplasm. It is found in the cytoskeleton. Its subcellular location is the membrane. In terms of biological role, the B regulatory subunit might modulate substrate selectivity and catalytic activity, and might also direct the localization of the catalytic enzyme to a particular subcellular compartment. Negatively controls the initiation of oocyte maturation. The protein is Serine/threonine-protein phosphatase 2A 55 kDa regulatory subunit B beta isoform (ppp2r2b) of Xenopus laevis (African clawed frog).